Reading from the N-terminus, the 206-residue chain is MNRTKSSKRWLQEHFDDVYVKKAQAEGYRSRAVYKLKEIDDKESLIKPGMTVVDLGASPGGWTQYASEKMKGSGRLVALDILPMDALPNVEFILGDFREDNVLQELINLIPQRTLDLLLSDMAPNMSGSSAIDIPRAMYLVELAFDFAEKMLKPGGNMLVKIFHGSGFDELVKQARASFEKVVIRKPSASRSRSKETYLLAKGYNL.

S-adenosyl-L-methionine is bound by residues Gly60, Trp62, Asp80, Asp96, and Asp121. Catalysis depends on Lys161, which acts as the Proton acceptor.

It belongs to the class I-like SAM-binding methyltransferase superfamily. RNA methyltransferase RlmE family.

It is found in the cytoplasm. The enzyme catalyses uridine(2552) in 23S rRNA + S-adenosyl-L-methionine = 2'-O-methyluridine(2552) in 23S rRNA + S-adenosyl-L-homocysteine + H(+). In terms of biological role, specifically methylates the uridine in position 2552 of 23S rRNA at the 2'-O position of the ribose in the fully assembled 50S ribosomal subunit. This is Ribosomal RNA large subunit methyltransferase E from Legionella pneumophila (strain Lens).